Reading from the N-terminus, the 257-residue chain is Sad1-interacting factor 1 (257 aa).

Residues 16–68 are disordered; sequence LNKIKQGGASRINQILGQNSDDSQSDVRATASEEAVHSETATPVTPMSSGFME. Polar residues-rich tracts occupy residues 26-37 and 54-63; these read RINQILGQNSDD and ETATPVTPMS. Ser-35 carries the phosphoserine modification. The residue at position 132 (Ser-132) is a Phosphoserine. A Phosphothreonine modification is found at Thr-134. 2 consecutive transmembrane segments (helical) span residues 160–180 and 231–251; these read LLAI…LLPW and FTQL…CCYF.

Interacts with kms1 and sad1.

It localises to the membrane. The protein is Sad1-interacting factor 1 (sif1) of Schizosaccharomyces pombe (strain 972 / ATCC 24843) (Fission yeast).